The sequence spans 1197 residues: MKFLPYIFLLCCGLWSTISFADEDYIEYRGISSNNRVTLDPLRLSNKELRWLASKKNLVIAVHKSQTATLLHTDSQQRVRGINADYLNLLKRALNIKLTLREYADHQKAMDALAEGEVDIVLSHLVTSPPLNNDIAATKPLIITFPALVTTLHDSMRPLTSPKPVNIARVANYPPDEVIHQSFPKATIISFTNLYQALASVSAGHNDYFIGSNIITSSMISRYFTHSLNVVKYYNSPRQYNFFLTRKESVILNEVLNRFVDALTNEVRYEVSQNWLDTGNLAFLNKPLELTEHEKQWIKQHPNLKVLENPYSPPYSMTDENGSVRGVMGDILNIITLQTGLNFSPITVSHNIHAGTQLSPGGWDIIPGAIYSEDRENNVLFAEAFITTPYVFVMQKAPDSEQTLKKGMKVAIPYYYELHSQLKEMYPEVEWIQVDNASAAFHKVKEGELDALVATQLNSRYMIDHYYPNELYHFLIPGVPNASLSFAFPRGEPELKDIINKALNAIPPSEVLRLTEKWIKMPNVTIDTWDLYSEQFYIVTTLSVLLVGSSLLWGFYLLRSVRRRKVIQGDLENQISFRKALSDSLPNPTYVVNWQGNVISHNSAFEHYFTADYYKNAMLPLENSDSPFKDVFSNAHEVTAETKENRTIYTQVFEIDNGIEKRCINHWHTLCNLPASDNAVYICGWQDITETRDLINALEVEKNKAIKATVAKSQFLATMSHEIRTPISSIMGFLELLSGSGLSKEQRVEAISLAYATGQSLLGLIGEILDVDKIESGNYQLQPQWVDIPTLVQNTCHSFGAIAASKSIALSCSSTFPEHYLVKIDPQAFKQVLSNLLSNALKFTTEGAVKITTSLGHIDDNHAVIKMTIMDSGSGLSQEEQQQLFKRYSQTSAGRQQTGSGLGLMICKELIKNMQGDLSLESHPGIGTTFTITIPVEISQQVATVEAKAEQPITLPEKLSILIADDHPTNRLLLKRQLNLLGYDVDEATDGVQALHKVSMQHYDLLITDVNMPNMDGFELTRKLREQNSSLPIWGLTANAQANEREKGLSCGMNLCLFKPLTLDVLKTHLSQLHQVAHIAPQYRHLDIEALKNNTANDLQLMQEILMTFQHETHKDLPAAFQALEAGDNRTFHQCIHRIHGAANILNLQKLINISHQLEITPVSDDSKPEILQLLNSVKEHIAELDQEIAVFCQKND.

Positions 1 to 21 (MKFLPYIFLLCCGLWSTISFA) are cleaved as a signal peptide. Residues 22-325 (DEDYIEYRGI…SMTDENGSVR (304 aa)) lie on the Cytoplasmic side of the membrane. Residues 326-346 (GVMGDILNIITLQTGLNFSPI) traverse the membrane as a helical segment. Residues 347–537 (TVSHNIHAGT…TWDLYSEQFY (191 aa)) are Periplasmic-facing. Residues 538-558 (IVTTLSVLLVGSSLLWGFYLL) form a helical membrane-spanning segment. Over 559 to 1197 (RSVRRRKVIQ…EIAVFCQKND (639 aa)) the chain is Cytoplasmic. One can recognise a Histidine kinase domain in the interval 718–938 (TMSHEIRTPI…TFTITIPVEI (221 aa)). His-721 carries the phosphohistidine; by autocatalysis modification. The region spanning 960 to 1074 (SILIADDHPT…VLKTHLSQLH (115 aa)) is the Response regulatory domain. The residue at position 1009 (Asp-1009) is a 4-aspartylphosphate. In terms of domain architecture, HPt spans 1098 to 1197 (DLQLMQEILM…EIAVFCQKND (100 aa)). His-1137 carries the phosphohistidine modification.

In terms of processing, activation requires a sequential transfer of a phosphate group from a His in the primary transmitter domain, to an Asp in the receiver domain and to a His in the secondary transmitter domain.

It is found in the cell inner membrane. It carries out the reaction ATP + protein L-histidine = ADP + protein N-phospho-L-histidine.. In terms of biological role, member of the two-component regulatory system EvgS/EvgA. Phosphorylates EvgA via a four-step phosphorelay in response to environmental signals. This is Sensor protein EvgS (evgS) from Escherichia coli (strain K12).